A 268-amino-acid chain; its full sequence is Myb-related protein 315 (268 aa).

2 HTH myb-type domains span residues 9-61 and 62-116; these read KFGL…MNYL and RPDL…KKKL. 2 DNA-binding regions (H-T-H motif) span residues 37 to 61 and 89 to 112; these read WRVI…MNYL and WSKI…NTHI.

As to expression, expressed in roots, stems, leaves, seed pods and flowers. Strongest expression in the stem.

It localises to the nucleus. Functionally, transcription factor. The polypeptide is Myb-related protein 315 (Antirrhinum majus (Garden snapdragon)).